Here is a 486-residue protein sequence, read N- to C-terminus: Betaine aldehyde dehydrogenase (486 aa).

Thr-23 and Asp-90 together coordinate K(+). NAD(+) is bound at residue 147-149 (GAW). Lys-159 acts as the Charge relay system in catalysis. Residues 173–176 (KPSE) and 226–229 (ESGT) each bind NAD(+). Residue Leu-241 participates in K(+) binding. The active-site Proton acceptor is the Glu-247. Residues Gly-249, Cys-281, and Glu-382 each contribute to the NAD(+) site. Cys-281 functions as the Nucleophile in the catalytic mechanism. The residue at position 281 (Cys-281) is a Cysteine sulfenic acid (-SOH). Residues Lys-452 and Gly-455 each coordinate K(+). The active-site Charge relay system is Glu-459.

The protein belongs to the aldehyde dehydrogenase family. Dimer of dimers. The cofactor is K(+).

It carries out the reaction betaine aldehyde + NAD(+) + H2O = glycine betaine + NADH + 2 H(+). The protein operates within amine and polyamine biosynthesis; betaine biosynthesis via choline pathway; betaine from betaine aldehyde: step 1/1. Its function is as follows. Involved in the biosynthesis of the osmoprotectant glycine betaine. Catalyzes the irreversible oxidation of betaine aldehyde to the corresponding acid. The protein is Betaine aldehyde dehydrogenase of Vibrio vulnificus (strain CMCP6).